The chain runs to 385 residues: Galactokinase (385 aa).

34 to 37 (EHTD) is a substrate binding site. Position 124–130 (124–130 (SAGLSSS)) interacts with ATP. Mg(2+)-binding residues include S130 and E162. The active-site Proton acceptor is D174. Y223 serves as a coordination point for substrate.

The protein belongs to the GHMP kinase family. GalK subfamily.

The protein localises to the cytoplasm. The catalysed reaction is alpha-D-galactose + ATP = alpha-D-galactose 1-phosphate + ADP + H(+). It functions in the pathway carbohydrate metabolism; galactose metabolism. Catalyzes the transfer of the gamma-phosphate of ATP to D-galactose to form alpha-D-galactose-1-phosphate (Gal-1-P). The protein is Galactokinase of Pasteurella multocida (strain Pm70).